Here is a 351-residue protein sequence, read N- to C-terminus: UDP-N-acetylenolpyruvoylglucosamine reductase (351 aa).

The region spanning 25–196 (HIQAQARWLL…TAVEFRLPLL (172 aa)) is the FAD-binding PCMH-type domain. R173 is an active-site residue. S246 functions as the Proton donor in the catalytic mechanism. E343 is an active-site residue.

Belongs to the MurB family. FAD serves as cofactor.

The protein resides in the cytoplasm. The catalysed reaction is UDP-N-acetyl-alpha-D-muramate + NADP(+) = UDP-N-acetyl-3-O-(1-carboxyvinyl)-alpha-D-glucosamine + NADPH + H(+). Its pathway is cell wall biogenesis; peptidoglycan biosynthesis. Functionally, cell wall formation. The sequence is that of UDP-N-acetylenolpyruvoylglucosamine reductase from Xylella fastidiosa (strain M23).